The chain runs to 752 residues: Cation-transporting P-type ATPase B (752 aa).

The 64-residue stretch at 15–78 (RRIRLDVLGM…VVEKAGYHAA (64 aa)) folds into the HMA domain. Residues Cys26 and Cys29 each contribute to the a metal cation site. 6 helical membrane-spanning segments follow: residues 105 to 125 (LLVA…FAIV), 132 to 152 (GWGY…AWPF), 167 to 187 (METL…SSVF), 201 to 221 (AILN…VFVL), 361 to 381 (IAGV…AAWL), and 390 to 410 (AFSV…GLAT). Catalysis depends on Asp446, which acts as the 4-aspartylphosphate intermediate. The next 2 helical transmembrane spans lie at 491 to 511 (MAAA…FVAV) and 714 to 734 (AIPI…AMAF).

This sequence belongs to the cation transport ATPase (P-type) (TC 3.A.3) family. Type IB subfamily.

The protein localises to the cell membrane. The enzyme catalyses ATP + H2O = ADP + phosphate + H(+). The sequence is that of Cation-transporting P-type ATPase B (ctpB) from Mycobacterium tuberculosis (strain ATCC 25618 / H37Rv).